The chain runs to 562 residues: Sperm-tail PG-rich repeat-containing protein 2 (562 aa).

3 STPGR repeats span residues Gly-21–Leu-31, Ser-60–Asn-73, and Pro-96–Pro-118. Disordered regions lie at residues Lys-114–Ile-136 and Ser-192–Gln-215. The span at Pro-127–Ile-136 shows a compositional bias: low complexity. Positions Gly-193–Asp-202 are enriched in basic and acidic residues. STPGR repeat units follow at residues Pro-204–Glu-227, Pro-253–His-271, Thr-336–Ala-350, Thr-385–Phe-409, Thr-425–Leu-462, and Thr-478–Ser-492. Residues Ser-543 to Ala-562 form a disordered region. Residues Arg-551–Ala-562 show a composition bias toward basic residues.

The chain is Sperm-tail PG-rich repeat-containing protein 2 (stpg2) from Danio rerio (Zebrafish).